We begin with the raw amino-acid sequence, 346 residues long: Annexin A1 (346 aa).

At Ala-2 the chain carries N-acetylalanine. At Ser-5 the chain carries Phosphoserine; by TRPM7. An Isoglutamyl lysine isopeptide (Gln-Lys) (interchain with K-?) cross-link involves residue Gln-19. The residue at position 21 (Tyr-21) is a Phosphotyrosine; by EGFR. The residue at position 27 (Ser-27) is a Phosphoserine; by PKC. Phosphoserine occurs at positions 34 and 37. 4 Annexin repeats span residues 42-113, 114-185, 197-269, and 273-344; these read FNPS…AMLK, TPAQ…ALAK, DLAD…TIVK, and STPA…ALCG. The residue at position 58 (Lys-58) is an N6-acetyllysine. 11 residues coordinate Ca(2+): Gly-59, Val-60, Glu-62, Lys-97, Leu-100, Glu-105, Met-127, Gly-129, Gly-131, Thr-132, and Glu-134. Position 136 is a phosphothreonine (Thr-136). Residues Asp-171, Gly-210, and Arg-213 each coordinate Ca(2+). Lys-214 participates in a covalent cross-link: Glycyl lysine isopeptide (Lys-Gly) (interchain with G-Cter in SUMO1); alternate. A Glycyl lysine isopeptide (Lys-Gly) (interchain with G-Cter in SUMO2); alternate cross-link involves residue Lys-214. The Ca(2+) site is built by Gly-215, Asp-253, Glu-255, and Leu-256. Residue Lys-257 forms a Glycyl lysine isopeptide (Lys-Gly) (interchain with G-Cter in SUMO1) linkage. Ca(2+) is bound by residues Glu-261, Met-286, Gly-288, and Gly-290. The residue at position 312 (Lys-312) is an N6-acetyllysine. The cysteines at positions 324 and 343 are disulfide-linked. Ca(2+) is bound by residues Leu-328, Glu-330, and Thr-331. Residue Lys-332 forms a Glycyl lysine isopeptide (Lys-Gly) (interchain with G-Cter in SUMO1) linkage. Position 336 (Glu-336) interacts with Ca(2+).

Belongs to the annexin family. In terms of assembly, homodimer; non-covalently linked. Homodimer; linked by transglutamylation. Homodimers linked by transglutamylation are observed in placenta, but not in other tissues. Interacts with S100A11. Heterotetramer, formed by two molecules each of S100A11 and ANXA1. Interacts with DYSF. Interacts with EGFR. Post-translationally, phosphorylated by protein kinase C, EGFR and TRPM7. Phosphorylated in response to EGF treatment. In terms of processing, sumoylated. Proteolytically cleaved by cathepsin CTSG to release the active N-terminal peptide Ac2-26. Detected in eosinophils. Detected in lung, placenta, spleen and thymus (at protein level).

Its subcellular location is the nucleus. It is found in the cytoplasm. The protein resides in the cell projection. It localises to the cilium. The protein localises to the basolateral cell membrane. Its subcellular location is the lateral cell membrane. It is found in the cell membrane. The protein resides in the apical cell membrane. It localises to the membrane. The protein localises to the endosome membrane. Its subcellular location is the secreted. It is found in the extracellular space. The protein resides in the early endosome. It localises to the cytoplasmic vesicle membrane. The protein localises to the extracellular exosome. Its subcellular location is the cytoplasmic vesicle. It is found in the secretory vesicle lumen. The protein resides in the phagocytic cup. Its function is as follows. Plays important roles in the innate immune response as effector of glucocorticoid-mediated responses and regulator of the inflammatory process. Has anti-inflammatory activity. Plays a role in glucocorticoid-mediated down-regulation of the early phase of the inflammatory response. Contributes to the adaptive immune response by enhancing signaling cascades that are triggered by T-cell activation, regulates differentiation and proliferation of activated T-cells. Promotes the differentiation of T-cells into Th1 cells and negatively regulates differentiation into Th2 cells. Has no effect on unstimulated T-cells. Negatively regulates hormone exocytosis via activation of the formyl peptide receptors and reorganization of the actin cytoskeleton. Has high affinity for Ca(2+) and can bind up to eight Ca(2+) ions. Displays Ca(2+)-dependent binding to phospholipid membranes. Plays a role in the formation of phagocytic cups and phagosomes. Plays a role in phagocytosis by mediating the Ca(2+)-dependent interaction between phagosomes and the actin cytoskeleton. Functionally, functions at least in part by activating the formyl peptide receptors and downstream signaling cascades. Promotes chemotaxis of granulocytes and monocytes via activation of the formyl peptide receptors. Promotes rearrangement of the actin cytoskeleton, cell polarization and cell migration. Promotes resolution of inflammation and wound healing. Acts via neutrophil N-formyl peptide receptors to enhance the release of CXCL2. This Rattus norvegicus (Rat) protein is Annexin A1 (Anxa1).